Here is an 846-residue protein sequence, read N- to C-terminus: Protein IRS1 (846 aa).

Disordered regions lie at residues 1 to 82 (MAQR…NFWH), 366 to 385 (TGTAAGTTSPPAASGTETEA), 606 to 626 (WLMEQPPPPSRQTKPDAATMP), and 714 to 846 (QVIP…HVHH). Gly residues predominate over residues 16-25 (RGRGAGGPSG). The span at 26–56 (VGSSPPSSCVPMGAPSTAGTGASAAATTTPG) shows a compositional bias: low complexity. Residues 722-732 (EPEDDDEDPTY) show a composition bias toward acidic residues. A compositionally biased stretch (basic residues) spans 832–846 (RPKKCQTHAPHHVHH).

The protein belongs to the herpesviridae US22 family. Interacts (via N-terminus) with the viral DNA polymerase accessory subunit UL44. Interacts (via C-terminus) with host EIF2AK2/PKR.

The protein resides in the virion. It localises to the host cytoplasm. It is found in the host nucleus. Functionally, inhibits the establishment of the antiviral state in the infected cell. Prevents the phosphorylation of the host eukaryotic translation initiation factor eIF-2alpha and thus the shutoff of viral and cellular protein synthesis by directly interacting with EIF2AK2/PKR. May also participate in viral DNA replication by interacting with the DNA polymerase accessory protein and the lytic origin of replication, oriLyt. This is Protein IRS1 (IRS1) from Homo sapiens (Human).